Reading from the N-terminus, the 151-residue chain is Probable ubiquitin-conjugating enzyme E2 W-B (151 aa).

Positions 3–151 (SMQKRLQKEL…TKWWYHDDTC (149 aa)) constitute a UBC core domain. The active-site Glycyl thioester intermediate is cysteine 91.

This sequence belongs to the ubiquitin-conjugating enzyme family.

The protein resides in the nucleus. The catalysed reaction is S-ubiquitinyl-[E1 ubiquitin-activating enzyme]-L-cysteine + [E2 ubiquitin-conjugating enzyme]-L-cysteine = [E1 ubiquitin-activating enzyme]-L-cysteine + S-ubiquitinyl-[E2 ubiquitin-conjugating enzyme]-L-cysteine.. It catalyses the reaction S-ubiquitinyl-[E1 ubiquitin-activating enzyme]-L-cysteine + [acceptor protein]-N-terminal-amino acid = [E1 ubiquitin-activating enzyme]-L-cysteine + N-terminal-ubiquitinyl-[acceptor protein].. The protein operates within protein modification; protein ubiquitination. Accepts ubiquitin from the E1 complex and catalyzes its covalent attachment to other proteins. Catalyzes monoubiquitination. Involved in degradation of misfolded chaperone substrate and DNA repair. This chain is Probable ubiquitin-conjugating enzyme E2 W-B (ube2wb), found in Danio rerio (Zebrafish).